The primary structure comprises 1081 residues: Dyslexia-associated protein KIAA0319 homolog (1081 aa).

The first 22 residues, 1–22 (MVSPPGVLSSLLLLAAMAGGSS), serve as a signal peptide directing secretion. In terms of domain architecture, MANSC spans 23–99 (QQCSEGRTYS…PRTTGPIRSY (77 aa)). Residues 23 to 964 (QQCSEGRTYS…WDGESNCEWS (942 aa)) lie on the Extracellular side of the membrane. 3 disordered regions span residues 141-160 (LPFL…SDDY), 168-216 (LQPS…DLTP), and 228-298 (NEST…TTVE). Polar residues-rich tracts occupy residues 197 to 209 (ASAT…ASTE), 228 to 253 (NEST…TASP), and 283 to 298 (HNPS…TTVE). 5 consecutive PKD domains span residues 345–436 (AVSA…VMPA), 444–533 (VAIV…IRGS), 539–629 (VANA…VQAE), 630–723 (NNQA…VKKE), and 729–820 (RAQA…VLPD). N-linked (GlcNAc...) asparagine glycans are attached at residues N430 and N522. The chain crosses the membrane as a helical span at residues 965–985 (VFYVAALALTLTVLTGAVTWV). Over 986–1081 (CICCCRRRKR…VSFGYYSKDR (96 aa)) the chain is Cytoplasmic. The Endocytosis signal signature appears at 1004–1007 (YTIL).

As to quaternary structure, homodimer. Interacts with AP2M1; required for clathrin-mediated endocytosis. Post-translationally, N-glycosylated. O-glycosylated. In terms of processing, shedding of the extracellular domain and intramembrane cleavage produce several proteolytic products. The intramembrane cleavage releases a soluble cytoplasmic polypeptide that translocates to the nucleolus. As to expression, highly expressed during development in ventricular zone, intermediate zone, cortical plate, striatum, hippocampus, and brain stem.

Its subcellular location is the cell membrane. It is found in the early endosome membrane. Involved in neuronal migration during development of the cerebral neocortex. May function in a cell autonomous and a non-cell autonomous manner and play a role in appropriate adhesion between migrating neurons and radial glial fibers. May also regulate growth and differentiation of dendrites. The sequence is that of Dyslexia-associated protein KIAA0319 homolog from Rattus norvegicus (Rat).